The sequence spans 441 residues: NADH-quinone oxidoreductase subunit D (441 aa).

The protein belongs to the complex I 49 kDa subunit family. As to quaternary structure, NDH-1 is composed of 14 different subunits. Subunits NuoB, C, D, E, F, and G constitute the peripheral sector of the complex.

It localises to the cell membrane. The catalysed reaction is a quinone + NADH + 5 H(+)(in) = a quinol + NAD(+) + 4 H(+)(out). Functionally, NDH-1 shuttles electrons from NADH, via FMN and iron-sulfur (Fe-S) centers, to quinones in the respiratory chain. The immediate electron acceptor for the enzyme in this species is believed to be a menaquinone. Couples the redox reaction to proton translocation (for every two electrons transferred, four hydrogen ions are translocated across the cytoplasmic membrane), and thus conserves the redox energy in a proton gradient. The sequence is that of NADH-quinone oxidoreductase subunit D from Mycobacterium avium (strain 104).